We begin with the raw amino-acid sequence, 493 residues long: Cobyric acid synthase (493 aa).

One can recognise a GATase cobBQ-type domain in the interval proline 246 to phenylalanine 440. The active-site Nucleophile is cysteine 326. Residue histidine 432 is part of the active site.

Belongs to the CobB/CobQ family. CobQ subfamily.

It participates in cofactor biosynthesis; adenosylcobalamin biosynthesis. Catalyzes amidations at positions B, D, E, and G on adenosylcobyrinic A,C-diamide. NH(2) groups are provided by glutamine, and one molecule of ATP is hydrogenolyzed for each amidation. The chain is Cobyric acid synthase from Clostridium botulinum (strain Kyoto / Type A2).